The primary structure comprises 200 residues: Imidazoleglycerol-phosphate dehydratase (200 aa).

Residues E13, 39 to 47 (HMLTLLTFH), 68 to 72 (HHLIE), R94, and R116 each bind substrate. Mn(2+) contacts are provided by H39, H68, H69, and E72. Residues E141, H165, H166, and E169 each coordinate Mn(2+). Residues 165–173 (HHIIEGMFK) and 195–197 (SSK) each bind substrate.

Belongs to the imidazoleglycerol-phosphate dehydratase family. Requires Mn(2+) as cofactor.

The protein localises to the cytoplasm. The catalysed reaction is D-erythro-1-(imidazol-4-yl)glycerol 3-phosphate = 3-(imidazol-4-yl)-2-oxopropyl phosphate + H2O. The protein operates within amino-acid biosynthesis; L-histidine biosynthesis; L-histidine from 5-phospho-alpha-D-ribose 1-diphosphate: step 6/9. This is Imidazoleglycerol-phosphate dehydratase (hisB) from Lactococcus lactis subsp. lactis (strain IL1403) (Streptococcus lactis).